Reading from the N-terminus, the 948-residue chain is Bifunctional glutamine synthetase adenylyltransferase/adenylyl-removing enzyme (948 aa).

The adenylyl removase stretch occupies residues 1–447 (MLTPDNKLMS…EFQQVVGAES (447 aa)). Residues 453–948 (EQGLQVLWQD…NCWNHLLEDD (496 aa)) form an adenylyl transferase region.

This sequence belongs to the GlnE family. Requires Mg(2+) as cofactor.

It carries out the reaction [glutamine synthetase]-O(4)-(5'-adenylyl)-L-tyrosine + phosphate = [glutamine synthetase]-L-tyrosine + ADP. It catalyses the reaction [glutamine synthetase]-L-tyrosine + ATP = [glutamine synthetase]-O(4)-(5'-adenylyl)-L-tyrosine + diphosphate. Functionally, involved in the regulation of glutamine synthetase GlnA, a key enzyme in the process to assimilate ammonia. When cellular nitrogen levels are high, the C-terminal adenylyl transferase (AT) inactivates GlnA by covalent transfer of an adenylyl group from ATP to specific tyrosine residue of GlnA, thus reducing its activity. Conversely, when nitrogen levels are low, the N-terminal adenylyl removase (AR) activates GlnA by removing the adenylyl group by phosphorolysis, increasing its activity. The regulatory region of GlnE binds the signal transduction protein PII (GlnB) which indicates the nitrogen status of the cell. This chain is Bifunctional glutamine synthetase adenylyltransferase/adenylyl-removing enzyme, found in Idiomarina loihiensis (strain ATCC BAA-735 / DSM 15497 / L2-TR).